A 269-amino-acid chain; its full sequence is MSRFDTLFAQLQAKNEGAFVPFVTLCDPDFDRSFDIICTLADNGADALELGFPFSDPLLDGPVIQAANNRALNAGCSTEKSFRLLAKVRSKYPEIPISLLLCANLIYAQTLDKFYQRCAEAGVDAVLVADIPLLACKDYVTAAKKHGIQPVFICPPNADEKTVAGVASHTEGYTYLVSRAGVTSAENQSHAANLDTLVERLKAHNAAPILQGFGIARPEQVKQALTLGTSGAISGSATVKIIEKNLDNHPACLQELARFTREMKAATHV.

Catalysis depends on proton acceptor residues Glu49 and Asp60.

It belongs to the TrpA family. In terms of assembly, tetramer of two alpha and two beta chains.

The catalysed reaction is (1S,2R)-1-C-(indol-3-yl)glycerol 3-phosphate + L-serine = D-glyceraldehyde 3-phosphate + L-tryptophan + H2O. Its pathway is amino-acid biosynthesis; L-tryptophan biosynthesis; L-tryptophan from chorismate: step 5/5. Functionally, the alpha subunit is responsible for the aldol cleavage of indoleglycerol phosphate to indole and glyceraldehyde 3-phosphate. In Actinobacillus succinogenes (strain ATCC 55618 / DSM 22257 / CCUG 43843 / 130Z), this protein is Tryptophan synthase alpha chain.